The following is an 83-amino-acid chain: Acyl carrier protein MmaB (83 aa).

Positions 3–83 constitute a Carrier domain; that stretch reads DPVRQRILLA…LSQSELESPT (81 aa). S39 bears the O-(pantetheine 4'-phosphoryl)serine mark.

The protein belongs to the acyl carrier protein (ACP) family. The cofactor is pantetheine 4'-phosphate.

Its pathway is lipid metabolism; fatty acid metabolism. Its function is as follows. Acyl-carrier protein (ACP) involved in the biosynthesis of a unique class of isonitrile lipopeptides (INLPs) that seem to play a role in metal acquisition in M.marinum. Is the dedicated ACP for the loading of activated acyl groups catalyzed by MmaC. This chain is Acyl carrier protein MmaB, found in Mycobacterium marinum (strain ATCC BAA-535 / M).